The primary structure comprises 276 residues: MSTYEGRWKTVKVEIEDGIAFVILNRPEKRNAMSPTLNREMIDVLETLEQDPAAGVLVLTGAGEAWTAGMDLKEYFREVDAGPEILQEKIRREASQWQWKLLRMYAKPTIAMVNGWCFGGGFSPLVACDLAICADEATFGLSEINWGIPPGNLVSKAMADTVGHRQSLYYIMTGKTFGGQKAAEMGLVNESVPLAQLREVTIELARNLLEKNPVVLRAAKHGFKRCRELTWEQNEDYLYAKLDQSRLLDTEGGREQGMKQFLDDKSIKPGLQAYKR.

4 residues coordinate acetyl-CoA: Lys-29, Ala-68, Met-70, and Leu-72. Residue Tyr-75 coordinates vanillin. Acetyl-CoA contacts are provided by Gly-120, Ser-142, and Trp-146. 2 residues coordinate vanillin: Gly-151 and Tyr-239.

It belongs to the enoyl-CoA hydratase/isomerase family. Homohexamer; dimer of trimers.

It carries out the reaction (E)-feruloyl-CoA + H2O = vanillin + acetyl-CoA. The enzyme catalyses (E)-caffeoyl-CoA + H2O = 3,4-dihydroxybenzaldehyde + acetyl-CoA. It catalyses the reaction (E)-4-coumaroyl-CoA + H2O = 4-hydroxybenzaldehyde + acetyl-CoA. The catalysed reaction is (E)-feruloyl-CoA + H2O = 3-hydroxy-3-(4-hydroxy-3-methoxyphenyl)propanoyl-CoA. It carries out the reaction 3-hydroxy-3-(4-hydroxy-3-methoxyphenyl)propanoyl-CoA = vanillin + acetyl-CoA. The enzyme catalyses (E)-caffeoyl-CoA + H2O = 3-hydroxy-3-(3,4-dihydroxyphenyl)propanoyl-CoA. It catalyses the reaction 3-hydroxy-3-(3,4-dihydroxyphenyl)propanoyl-CoA = 3,4-dihydroxybenzaldehyde + acetyl-CoA. The catalysed reaction is (E)-4-coumaroyl-CoA + H2O = 3-hydroxy-3-(4-hydroxyphenyl)propanoyl-CoA. It carries out the reaction 3-hydroxy-3-(4-hydroxyphenyl)propanoyl-CoA = 4-hydroxybenzaldehyde + acetyl-CoA. Its function is as follows. Catalyzes the hydration of the acyl-CoA thioester of ferulic acid and the subsequent retro-aldol cleavage of the hydrated intermediate to yield vanillin (4-hydroxy-3-methoxy-benzaldehyde). The enzyme is also active with caffeoyl-CoA and 4-coumaroyl-CoA producing 3,4-dihydroxybenzaldehyde and 4-hydroxybenzaldehyde, respectively. The sequence is that of Hydroxycinnamoyl-CoA hydratase-lyase from Pseudomonas fluorescens.